The following is a 111-amino-acid chain: uncharacterized protein (111 aa).

This is an uncharacterized protein from Acanthamoeba polyphaga mimivirus (APMV).